Consider the following 577-residue polypeptide: Arginine--tRNA ligase (577 aa).

The 'HIGH' region motif lies at 122-132 (PNVAKEMHVGH).

This sequence belongs to the class-I aminoacyl-tRNA synthetase family. In terms of assembly, monomer.

Its subcellular location is the cytoplasm. It carries out the reaction tRNA(Arg) + L-arginine + ATP = L-arginyl-tRNA(Arg) + AMP + diphosphate. This chain is Arginine--tRNA ligase, found in Escherichia coli O127:H6 (strain E2348/69 / EPEC).